Here is an 89-residue protein sequence, read N- to C-terminus: Small ribosomal subunit protein uS14 (89 aa).

Belongs to the universal ribosomal protein uS14 family. In terms of assembly, part of the 30S ribosomal subunit. Contacts proteins S3 and S10.

Functionally, binds 16S rRNA, required for the assembly of 30S particles and may also be responsible for determining the conformation of the 16S rRNA at the A site. The polypeptide is Small ribosomal subunit protein uS14 (Pelodictyon phaeoclathratiforme (strain DSM 5477 / BU-1)).